Consider the following 87-residue polypeptide: Small ribosomal subunit protein bS20 (87 aa).

Residues 1 to 22 (MANSAQARKRARQAVKQRAHNA) form a disordered region. Residues 7–19 (ARKRARQAVKQRA) are compositionally biased toward basic residues.

This sequence belongs to the bacterial ribosomal protein bS20 family.

Binds directly to 16S ribosomal RNA. The chain is Small ribosomal subunit protein bS20 from Methylobacillus flagellatus (strain ATCC 51484 / DSM 6875 / VKM B-1610 / KT).